The primary structure comprises 379 residues: Leukocyte elastase inhibitor (379 aa).

Residue M1 is modified to N-acetylmethionine. 2 positions are modified to N6-acetyllysine: K137 and K177. A CARD-binding motif (CBM) region spans residues 351 to 379 (NFNADHPFIFFIRHNPSANILFLGRFSSP).

This sequence belongs to the serpin family. Ov-serpin subfamily. Monomer. Interacts (via C-terminus) with CASP1; CASP4 (via CARD domain) and CASP5; these interactions regulate the activity of inflammatory caspases. Interacts with PRTN3. Interacts with GZMH. Interacts with TMSB4. In terms of processing, the N-terminus is blocked.

The protein localises to the secreted. Its subcellular location is the cytoplasm. It localises to the cytolytic granule. The protein resides in the early endosome. Its function is as follows. Neutrophil serine protease inhibitor that plays an essential role in the regulation of the innate immune response, inflammation and cellular homeostasis. Acts primarily to protect the cell from proteases released in the cytoplasm during stress or infection. These proteases are important in killing microbes but when released from granules, these potent enzymes also destroy host proteins and contribute to mortality. Regulates the activity of the neutrophil proteases elastase, cathepsin G, proteinase-3, chymase, chymotrypsin, and kallikrein-3. Also acts as a potent intracellular inhibitor of GZMH by directly blocking its proteolytic activity. During inflammation, limits the activity of inflammatory caspases CASP1, CASP4 and CASP5 by suppressing their caspase-recruitment domain (CARD) oligomerization and enzymatic activation. When secreted, promotes the proliferation of beta-cells via its protease inhibitory function. This is Leukocyte elastase inhibitor (SERPINB1) from Equus caballus (Horse).